The following is a 45-amino-acid chain: Thymosin beta (45 aa).

The disordered stretch occupies residues 1 to 45 (MADKPNMTEITSFDKTKLRKTETQEKNPLPTKETIEQERQGESTP). Composition is skewed to basic and acidic residues over residues 12-25 (SFDK…ETQE) and 33-45 (ETIE…ESTP).

It belongs to the thymosin beta family.

It localises to the cytoplasm. The protein localises to the cytoskeleton. Functionally, plays an important role in the organization of the cytoskeleton. Binds to and sequesters actin monomers (G actin) and therefore inhibits actin polymerization. In Danio rerio (Zebrafish), this protein is Thymosin beta (tmsb).